Here is a 368-residue protein sequence, read N- to C-terminus: tRNA-specific 2-thiouridylase MnmA (368 aa).

Residues 11–18 (GMSGGVDS) and methionine 37 each bind ATP. An interaction with target base in tRNA region spans residues 97-99 (NPD). Cysteine 102 acts as the Nucleophile in catalysis. Cysteine 102 and cysteine 199 are disulfide-bonded. Residue glycine 127 coordinates ATP. The tract at residues 149–151 (KDQ) is interaction with tRNA. The Cysteine persulfide intermediate role is filled by cysteine 199. The segment at 311–312 (RY) is interaction with tRNA.

This sequence belongs to the MnmA/TRMU family. In terms of assembly, interacts with TusE.

The protein resides in the cytoplasm. The enzyme catalyses S-sulfanyl-L-cysteinyl-[protein] + uridine(34) in tRNA + AH2 + ATP = 2-thiouridine(34) in tRNA + L-cysteinyl-[protein] + A + AMP + diphosphate + H(+). Catalyzes the 2-thiolation of uridine at the wobble position (U34) of tRNA(Lys), tRNA(Glu) and tRNA(Gln), leading to the formation of s(2)U34, the first step of tRNA-mnm(5)s(2)U34 synthesis. Sulfur is provided by IscS, via a sulfur-relay system. Binds ATP and its substrate tRNAs. This Shigella dysenteriae serotype 1 (strain Sd197) protein is tRNA-specific 2-thiouridylase MnmA.